The chain runs to 427 residues: Glutamyl-tRNA reductase (427 aa).

Residues 50–53 (TCNR), Ser-110, 115–117 (ETQ), and Gln-121 each bind substrate. The active-site Nucleophile is the Cys-51. 190–195 (GAGEMG) contacts NADP(+).

It belongs to the glutamyl-tRNA reductase family. As to quaternary structure, homodimer.

The enzyme catalyses (S)-4-amino-5-oxopentanoate + tRNA(Glu) + NADP(+) = L-glutamyl-tRNA(Glu) + NADPH + H(+). Its pathway is porphyrin-containing compound metabolism; protoporphyrin-IX biosynthesis; 5-aminolevulinate from L-glutamyl-tRNA(Glu): step 1/2. Functionally, catalyzes the NADPH-dependent reduction of glutamyl-tRNA(Glu) to glutamate 1-semialdehyde (GSA). The protein is Glutamyl-tRNA reductase of Campylobacter concisus (strain 13826).